A 446-amino-acid chain; its full sequence is Argininosuccinate synthase (446 aa).

Residues 17–25 (AFSGGLDTS) and Ala-43 each bind ATP. Tyr-99 contacts L-citrulline. Positions 129 and 131 each coordinate ATP. L-aspartate-binding residues include Thr-131, Asn-135, and Asp-136. Asn-135 is a binding site for L-citrulline. An ATP-binding site is contributed by Asp-136. 2 residues coordinate L-citrulline: Arg-139 and Ser-192. Asp-194 lines the ATP pocket. 3 residues coordinate L-citrulline: Thr-201, Glu-203, and Glu-280.

It belongs to the argininosuccinate synthase family. Type 2 subfamily. As to quaternary structure, homotetramer.

Its subcellular location is the cytoplasm. It carries out the reaction L-citrulline + L-aspartate + ATP = 2-(N(omega)-L-arginino)succinate + AMP + diphosphate + H(+). Its pathway is amino-acid biosynthesis; L-arginine biosynthesis; L-arginine from L-ornithine and carbamoyl phosphate: step 2/3. This chain is Argininosuccinate synthase, found in Burkholderia thailandensis (strain ATCC 700388 / DSM 13276 / CCUG 48851 / CIP 106301 / E264).